A 562-amino-acid polypeptide reads, in one-letter code: Formate--tetrahydrofolate ligase (562 aa).

71 to 78 (TPAGEGKS) contributes to the ATP binding site.

This sequence belongs to the formate--tetrahydrofolate ligase family.

The enzyme catalyses (6S)-5,6,7,8-tetrahydrofolate + formate + ATP = (6R)-10-formyltetrahydrofolate + ADP + phosphate. The protein operates within one-carbon metabolism; tetrahydrofolate interconversion. In Bacillus cereus (strain ATCC 14579 / DSM 31 / CCUG 7414 / JCM 2152 / NBRC 15305 / NCIMB 9373 / NCTC 2599 / NRRL B-3711), this protein is Formate--tetrahydrofolate ligase.